Here is a 242-residue protein sequence, read N- to C-terminus: ATP synthase subunit a (242 aa).

Transmembrane regions (helical) follow at residues 31–51, 84–104, 114–134, 140–160, 189–209, and 210–230; these read IYML…FYNW, FIPL…LGMT, IIVT…VGFV, FLTL…MIVI, VIAS…IPLM, and VILI…FTIL.

The protein belongs to the ATPase A chain family. In terms of assembly, F-type ATPases have 2 components, CF(1) - the catalytic core - and CF(0) - the membrane proton channel. CF(1) has five subunits: alpha(3), beta(3), gamma(1), delta(1), epsilon(1). CF(0) has three main subunits: a(1), b(2) and c(9-12). The alpha and beta chains form an alternating ring which encloses part of the gamma chain. CF(1) is attached to CF(0) by a central stalk formed by the gamma and epsilon chains, while a peripheral stalk is formed by the delta and b chains.

It is found in the cell inner membrane. In terms of biological role, key component of the proton channel; it plays a direct role in the translocation of protons across the membrane. This is ATP synthase subunit a from Rickettsia canadensis (strain McKiel).